Here is a 448-residue protein sequence, read N- to C-terminus: Probable glycine dehydrogenase (decarboxylating) subunit 1 (448 aa).

This sequence belongs to the GcvP family. N-terminal subunit subfamily. The glycine cleavage system is composed of four proteins: P, T, L and H. In this organism, the P 'protein' is a heterodimer of two subunits.

It carries out the reaction N(6)-[(R)-lipoyl]-L-lysyl-[glycine-cleavage complex H protein] + glycine + H(+) = N(6)-[(R)-S(8)-aminomethyldihydrolipoyl]-L-lysyl-[glycine-cleavage complex H protein] + CO2. In terms of biological role, the glycine cleavage system catalyzes the degradation of glycine. The P protein binds the alpha-amino group of glycine through its pyridoxal phosphate cofactor; CO(2) is released and the remaining methylamine moiety is then transferred to the lipoamide cofactor of the H protein. In Geobacillus sp. (strain WCH70), this protein is Probable glycine dehydrogenase (decarboxylating) subunit 1.